A 352-amino-acid polypeptide reads, in one-letter code: Ion-translocating oxidoreductase complex subunit D (352 aa).

5 helical membrane-spanning segments follow: residues I20–G40, G42–L62, A78–A109, P123–L143, and I148–A168. T187 carries the FMN phosphoryl threonine modification. Helical transmembrane passes span I214–L234, W242–F262, L267–L287, L301–P321, and D322–T342.

The protein belongs to the NqrB/RnfD family. In terms of assembly, the complex is composed of six subunits: RsxA, RsxB, RsxC, RsxD, RsxE and RsxG. It depends on FMN as a cofactor.

The protein localises to the cell inner membrane. Functionally, part of a membrane-bound complex that couples electron transfer with translocation of ions across the membrane. Required to maintain the reduced state of SoxR. The protein is Ion-translocating oxidoreductase complex subunit D of Escherichia coli O157:H7.